Reading from the N-terminus, the 706-residue chain is mRNA (2'-O-methyladenosine-N(6)-)-methyltransferase (706 aa).

The segment at 1 to 34 (MANENHGSPREGASLLSHSPGTSSQSQPCSPKPV) is disordered. A compositionally biased stretch (polar residues) spans 16 to 29 (LSHSPGTSSQSQPC). S30 carries the phosphoserine modification. Positions 43–77 (ELVHAGWEKCWSRRESRPYYFNRFTNQSLWEMPVL) constitute a WW domain. The segment at 88–148 (GLNATPLPQD…QSVPSSPSIP (61 aa)) is disordered. A Nuclear localization signal motif is present at residues 109 to 113 (KSRKR). S116 carries the post-translational modification Phosphoserine. A compositionally biased stretch (low complexity) spans 132–147 (IPVTPTSQSVPSSPSI). T152 carries the phosphothreonine modification. R234 and R264 together coordinate substrate. 552-555 (NPPF) is an S-adenosyl-L-methionine binding site. Substrate contacts are provided by residues E557 and 587 to 591 (WREPP). Residue 613–615 (FEH) participates in S-adenosyl-L-methionine binding. The interval 663–706 (TAAYKQSGRSHGSSSSSSSSSSSSEAKDRDSGREQGPSREPHPT) is disordered. Positions 668–686 (QSGRSHGSSSSSSSSSSSS) match the Nuclear localization signal motif. A compositionally biased stretch (low complexity) spans 675–686 (SSSSSSSSSSSS). The segment covering 687-706 (EAKDRDSGREQGPSREPHPT) has biased composition (basic and acidic residues).

It belongs to the CAPAM family. Interacts with POLR2A; interacts with the phosphorylated C-terminal domain (CTD) of POLR2A.

It localises to the nucleus. It carries out the reaction a 5'-end (N(7)-methyl 5'-triphosphoguanosine)-(2'-O-methyladenosine) in mRNA + S-adenosyl-L-methionine = a 5'-end (N(7)-methyl 5'-triphosphoguanosine)-(N(6),2'-O-dimethyladenosine) in mRNA + S-adenosyl-L-homocysteine + H(+). Cap-specific adenosine methyltransferase activity is inhibited by zinc. In terms of biological role, cap-specific adenosine methyltransferase that catalyzes formation of N(6),2'-O-dimethyladenosine cap (m6A(m)) by methylating the adenosine at the second transcribed position of capped mRNAs. Recruited to the early elongation complex of RNA polymerase II (RNAPII) via interaction with POLR2A and mediates formation of m6A(m) co-transcriptionally. In Mus musculus (Mouse), this protein is mRNA (2'-O-methyladenosine-N(6)-)-methyltransferase.